The chain runs to 517 residues: Ribonuclease Y (517 aa).

The helical transmembrane segment at 1–21 (MIESLIALIAAIVGLGIGYLV) threads the bilayer. One can recognise a KH domain in the interval 207-273 (LINVINIKND…TKVIELLVED (67 aa)). In terms of domain architecture, HD spans 333-426 (ALAHSLEVAH…VCAADTLSAA (94 aa)).

The protein belongs to the RNase Y family.

It is found in the cell membrane. Its function is as follows. Endoribonuclease that initiates mRNA decay. The protein is Ribonuclease Y of Campylobacter jejuni subsp. doylei (strain ATCC BAA-1458 / RM4099 / 269.97).